A 67-amino-acid polypeptide reads, in one-letter code: MQVLVRDNNVDQALKALKKKMQREGVFREMKLRRNYEKPSERRAREKAEAVRRARKLERKRLEREGF.

This sequence belongs to the bacterial ribosomal protein bS21 family.

The protein is Small ribosomal subunit protein bS21 of Paramagnetospirillum magneticum (strain ATCC 700264 / AMB-1) (Magnetospirillum magneticum).